We begin with the raw amino-acid sequence, 590 residues long: Transcription factor GTE7 (590 aa).

Residues 125 to 160 form a disordered region; sequence LNNFTGEKNDLGPKKKKQKKNVSGLKRSNQFGPSDP. A Bromo domain is found at 164-270; that stretch reads KLLAGMLNTC…DHFDGMFNPA (107 aa). Disordered stretches follow at residues 282–400 and 476–590; these read TGSS…KDPN and RQGF…EAQC. The span at 288–298 shows a compositional bias: basic and acidic residues; it reads PEPDFKPDFKQ. Pro residues predominate over residues 347-369; that stretch reads PSPPPPPPVIQPELPQPQPPPPQ. The 82-residue stretch at 394-475 folds into the NET domain; the sequence is PKAKDPNKRL…NYKKMASKIK (82 aa). Residues 498–508 show a composition bias toward basic and acidic residues; it reads SAEKRTRRGDA. The span at 509 to 521 shows a compositional bias: acidic residues; that stretch reads GEEDVDIGEDIPI. The segment covering 537–562 has biased composition (low complexity); it reads AAAASSGSSSSGSSSSSGGSSSSSDS.

Its subcellular location is the nucleus. This chain is Transcription factor GTE7 (GTE7), found in Arabidopsis thaliana (Mouse-ear cress).